The following is a 404-amino-acid chain: Serine/threonine transporter SstT (404 aa).

Transmembrane regions (helical) follow at residues 17-37, 39-59, 75-95, 138-158, 179-199, 212-232, 287-307, and 313-333; these read IGIG…LTGF, ILGK…VFAL, MTLI…VAVL, ALAT…GLAL, IVVW…FTTI, FLIL…NPLI, IPLG…VLTL, and FGIP…AVSA.

Belongs to the dicarboxylate/amino acid:cation symporter (DAACS) (TC 2.A.23) family.

It localises to the cell membrane. It carries out the reaction L-serine(in) + Na(+)(in) = L-serine(out) + Na(+)(out). The enzyme catalyses L-threonine(in) + Na(+)(in) = L-threonine(out) + Na(+)(out). Involved in the import of serine and threonine into the cell, with the concomitant import of sodium (symport system). This chain is Serine/threonine transporter SstT, found in Streptococcus pyogenes serotype M1.